We begin with the raw amino-acid sequence, 609 residues long: Meiotically up-regulated gene 28 protein (609 aa).

RRM domains are found at residues 20-103 (ISIY…YTHI) and 419-499 (CNLF…YAEK).

It is found in the cytoplasm. In terms of biological role, has a role in sporulation. This Schizosaccharomyces pombe (strain 972 / ATCC 24843) (Fission yeast) protein is Meiotically up-regulated gene 28 protein (mug28).